The chain runs to 841 residues: Phosphatidylglycerol lysyltransferase (841 aa).

Residues 1–8 (MTKELRSK) are Cytoplasmic-facing. The helical transmembrane segment at 9 to 29 (LFTILKIAFALTLFTIVAITL) threads the bilayer. The Extracellular segment spans residues 30–52 (YKELSHINLKDAIKSFSKINRFW). Residues 53–73 (LVALFLSGGASIIVLSIYDVI) form a helical membrane-spanning segment. The Cytoplasmic portion of the chain corresponds to 74–89 (LAKTLKLKIGLAKTIR). A helical membrane pass occupies residues 90-110 (IGYIVNALNAVVGFGGFIGAS). Over 111-129 (VRFLFYKNTTDDKKALFHT) the chain is Extracellular. Residues 130-150 (ISIVLISMLTGLSLLSILVVI) form a helical membrane-spanning segment. The Cytoplasmic segment spans residues 151–164 (HVFDISHIFTPYPW). The chain crosses the membrane as a helical span at residues 165-185 (VKWLMYVVALFLPIFVVFTII). At 186–193 (KPVQKTHR) the chain is on the extracellular side. A helical membrane pass occupies residues 194-216 (LLGVYCTIVSGVEWFVAALVLYM). Residues 217-229 (SMAIVGVQIPFAT) are Cytoplasmic-facing. The helical transmembrane segment at 230-250 (FMGIFILAALSGLISFIPGGF) threads the bilayer. Residues 251-270 (GTFDLVVLLGLKALNVNEEA) lie on the Extracellular side of the membrane. The helical transmembrane segment at 271–291 (IVLGLSLYRFAYYLFPVLIAL) threads the bilayer. The Cytoplasmic portion of the chain corresponds to 292–336 (ILSTFEFRSTAKRYWEDSRILVPVKDMTSLLGSYQKDIIARIPSF). Residues 337–357 (AIALLLLFTSLVFFLNNLTII) form a helical membrane-spanning segment. The Extracellular portion of the chain corresponds to 358-367 (YDGLYDPNHY). The helical transmembrane segment at 368-388 (IYYIIVSIHTCACLLLLLNVI) threads the bilayer. The Cytoplasmic portion of the chain corresponds to 389–392 (GVYK). A helical transmembrane segment spans residues 393–413 (LSKRAILFSIISVLFIFIATA). Over 414 to 415 (YT) the chain is Extracellular. The chain crosses the membrane as a helical span at residues 416-436 (YASFILLSWLTVIFILLLVFY). At 437–448 (RRARVIKRPFRY) the chain is on the cytoplasmic side. A helical transmembrane segment spans residues 449 to 469 (SKLLLSVITGAIILYINHLVI). Topologically, residues 470 to 489 (KSTFYSLEIYHIEMLTSILR) are extracellular. The helical transmembrane segment at 490-510 (YYFWITILLVAIIVGVIVWWF) threads the bilayer. Residues 511–841 (EYRYRSSNSR…KVMRVIRKNN (331 aa)) lie on the Cytoplasmic side of the membrane.

Belongs to the LPG synthase family.

Its subcellular location is the cell membrane. It carries out the reaction L-lysyl-tRNA(Lys) + a 1,2-diacyl-sn-glycero-3-phospho-(1'-sn-glycerol) = a 1,2-diacyl-sn-glycero-3-phospho-1'-(3'-O-L-lysyl)-sn-glycerol + tRNA(Lys). Its function is as follows. Catalyzes the transfer of a lysyl group from L-lysyl-tRNA(Lys) to membrane-bound phosphatidylglycerol (PG), which produces lysylphosphatidylglycerol (LPG), a major component of the bacterial membrane with a positive net charge. LPG synthesis contributes to bacterial virulence as it is involved in the resistance mechanism against cationic antimicrobial peptides (CAMP) produces by the host's immune system (defensins, cathelicidins) and by the competing microorganisms (bacteriocins). In fact, the modification of anionic phosphatidylglycerol with positively charged L-lysine results in repulsion of the peptides. In Staphylococcus xylosus, this protein is Phosphatidylglycerol lysyltransferase (mprF).